Reading from the N-terminus, the 261-residue chain is Triosephosphate isomerase (261 aa).

Asn10 to Lys12 contacts substrate. His100 functions as the Electrophile in the catalytic mechanism. Glu172 serves as the catalytic Proton acceptor. Substrate-binding positions include Gly178, Ser218, and Gly239–Gly240.

This sequence belongs to the triosephosphate isomerase family. In terms of assembly, homodimer.

Its subcellular location is the cytoplasm. The enzyme catalyses D-glyceraldehyde 3-phosphate = dihydroxyacetone phosphate. Its pathway is carbohydrate biosynthesis; gluconeogenesis. The protein operates within carbohydrate degradation; glycolysis; D-glyceraldehyde 3-phosphate from glycerone phosphate: step 1/1. Involved in the gluconeogenesis. Catalyzes stereospecifically the conversion of dihydroxyacetone phosphate (DHAP) to D-glyceraldehyde-3-phosphate (G3P). The polypeptide is Triosephosphate isomerase (Mycobacterium bovis (strain BCG / Pasteur 1173P2)).